The chain runs to 808 residues: Protein tortoise (808 aa).

A coiled-coil region spans residues 43–78 (KDRKELYSLNNDSIKKKLNQLKDETNQLLKERGEEL). The segment at 152-171 (LTSGGANKKKSPFLEDNNNK) is disordered. Positions 694 to 733 (EDLDFQIEELELMIKNKKILEREIKAHNEKISKIIKDSRD) form a coiled coil.

It is found in the mitochondrion. In terms of biological role, required for efficient chemotaxis. This Dictyostelium discoideum (Social amoeba) protein is Protein tortoise (torA).